Consider the following 598-residue polypeptide: Aspartate--tRNA(Asp/Asn) ligase (598 aa).

Residue E177 participates in L-aspartate binding. The aspartate stretch occupies residues 201–204; the sequence is QLFK. Residue R223 participates in L-aspartate binding. ATP-binding positions include 223-225 and Q232; that span reads RDE. H456 contacts L-aspartate. Residue E493 participates in ATP binding. R500 contacts L-aspartate. Position 545 to 548 (545 to 548) interacts with ATP; it reads GLDR.

Belongs to the class-II aminoacyl-tRNA synthetase family. Type 1 subfamily. Homodimer.

It localises to the cytoplasm. It catalyses the reaction tRNA(Asx) + L-aspartate + ATP = L-aspartyl-tRNA(Asx) + AMP + diphosphate. In terms of biological role, aspartyl-tRNA synthetase with relaxed tRNA specificity since it is able to aspartylate not only its cognate tRNA(Asp) but also tRNA(Asn). Reaction proceeds in two steps: L-aspartate is first activated by ATP to form Asp-AMP and then transferred to the acceptor end of tRNA(Asp/Asn). In Prochlorococcus marinus (strain MIT 9301), this protein is Aspartate--tRNA(Asp/Asn) ligase.